A 348-amino-acid polypeptide reads, in one-letter code: MDQAKSKALEAALSQIEKQFGKGSIMRLGSDRTMDIDVISTGSLGLDIALGVGGLPRGRIVEIYGPESSGKTTLTLSVIAEAQRQGLTCAFVDAEHALDPIYAAKLGVNIDELLCSQPDTGEQALEIVDILTRSGAVNLIVVDSVAALVPKAEIEGEIGDSHVGLAARMMSQAMRKITGNLKNSNTMCIFINQIRMKIGVMFGNPETTTGGNALKFYASVRLDIRRTGAVKEGEEVVGSETRVKVVKNKVAAPFRQAEFQIVYGQGISKAGEIVDLAVANNFVEKSGAWYSFEGNKIGQGKANTMKWLLENKPTMDKLEGMIREKLMSKPQAETSARLATQEELADDY.

Gly-65–Thr-72 serves as a coordination point for ATP. Residues Ser-328–Tyr-348 form a disordered region.

It belongs to the RecA family.

Its subcellular location is the cytoplasm. In terms of biological role, can catalyze the hydrolysis of ATP in the presence of single-stranded DNA, the ATP-dependent uptake of single-stranded DNA by duplex DNA, and the ATP-dependent hybridization of homologous single-stranded DNAs. It interacts with LexA causing its activation and leading to its autocatalytic cleavage. In Ectopseudomonas oleovorans (Pseudomonas oleovorans), this protein is Protein RecA.